We begin with the raw amino-acid sequence, 615 residues long: DNA mismatch repair protein MutL (615 aa).

Residues 363 to 397 (FAEPAAREPVAPRYTPAPASGSRPAAPWPNAQPGY) are disordered. The span at 364-391 (AEPAAREPVAPRYTPAPASGSRPAAPWP) shows a compositional bias: low complexity.

This sequence belongs to the DNA mismatch repair MutL/HexB family.

Functionally, this protein is involved in the repair of mismatches in DNA. It is required for dam-dependent methyl-directed DNA mismatch repair. May act as a 'molecular matchmaker', a protein that promotes the formation of a stable complex between two or more DNA-binding proteins in an ATP-dependent manner without itself being part of a final effector complex. The protein is DNA mismatch repair protein MutL of Shigella boydii serotype 4 (strain Sb227).